Reading from the N-terminus, the 831-residue chain is Periplasmic nitrate reductase (831 aa).

A signal peptide (tat-type signal) is located at residues 1 to 29 (MKISRRDFIKQTAITATASVAGVTLPAGA). The region spanning 41–97 (LKWSKAPCRFCGTGCGVTVAVKDNKVVATQGDPQAEVNKGLNCVKGYFLSKIMYGQD) is the 4Fe-4S Mo/W bis-MGD-type domain. 4 residues coordinate [4Fe-4S] cluster: Cys48, Cys51, Cys55, and Cys83. Mo-bis(molybdopterin guanine dinucleotide) is bound by residues Lys85, Gln152, Asn177, Cys181, 214 to 221 (WGSNMAEM), 245 to 249 (STFTH), 264 to 266 (QTD), Met375, Gln379, Asn485, 511 to 512 (SD), Lys534, Asp561, and 721 to 730 (TGRVLEHWHS). Residue Trp797 participates in substrate binding. Positions 805 and 822 each coordinate Mo-bis(molybdopterin guanine dinucleotide).

This sequence belongs to the prokaryotic molybdopterin-containing oxidoreductase family. NasA/NapA/NarB subfamily. Component of the periplasmic nitrate reductase NapAB complex composed of NapA and NapB. [4Fe-4S] cluster serves as cofactor. Mo-bis(molybdopterin guanine dinucleotide) is required as a cofactor. Post-translationally, predicted to be exported by the Tat system. The position of the signal peptide cleavage has been experimentally proven.

It localises to the periplasm. It carries out the reaction 2 Fe(II)-[cytochrome] + nitrate + 2 H(+) = 2 Fe(III)-[cytochrome] + nitrite + H2O. Its function is as follows. Catalytic subunit of the periplasmic nitrate reductase complex NapAB. Receives electrons from NapB and catalyzes the reduction of nitrate to nitrite. The sequence is that of Periplasmic nitrate reductase from Cupriavidus necator (strain ATCC 17699 / DSM 428 / KCTC 22496 / NCIMB 10442 / H16 / Stanier 337) (Ralstonia eutropha).